Here is a 457-residue protein sequence, read N- to C-terminus: Reticulophagy regulator 3 (457 aa).

Positions Met1–Cys24 are disordered. Transmembrane regions (helical) follow at residues Phe80–Ile100, Pro165–Tyr185, and Ile186–Ile206. A compositionally biased stretch (polar residues) spans Glu291–Thr305. Disordered stretches follow at residues Glu291–Thr351 and Ala410–Gln457. The segment covering Asp310 to Pro326 has biased composition (basic and acidic residues). Residues Leu428–Asp441 show a composition bias toward acidic residues. Positions Asp435–Leu440 match the LIR motif motif. The segment covering Ser443–Gln457 has biased composition (polar residues).

The protein belongs to the RETREG family. As to quaternary structure, interacts with ATG8 family modifier proteins.

The protein localises to the endoplasmic reticulum membrane. In terms of biological role, endoplasmic reticulum (ER)-anchored autophagy regulator which exists in an inactive state under basal conditions but is activated following cellular stress. When activated, induces ER fragmentation and mediates ER delivery into lysosomes through sequestration into autophagosomes via interaction with ATG8 family proteins. Promotes ER membrane curvature and ER tubulation required for subsequent ER fragmentation and engulfment into autophagosomes. The sequence is that of Reticulophagy regulator 3 (retreg3) from Xenopus tropicalis (Western clawed frog).